Reading from the N-terminus, the 335-residue chain is Nicotinate-nucleotide--dimethylbenzimidazole phosphoribosyltransferase (335 aa).

Glu304 (proton acceptor) is an active-site residue.

It belongs to the CobT family.

It carries out the reaction 5,6-dimethylbenzimidazole + nicotinate beta-D-ribonucleotide = alpha-ribazole 5'-phosphate + nicotinate + H(+). Its pathway is nucleoside biosynthesis; alpha-ribazole biosynthesis; alpha-ribazole from 5,6-dimethylbenzimidazole: step 1/2. Its function is as follows. Catalyzes the synthesis of alpha-ribazole-5'-phosphate from nicotinate mononucleotide (NAMN) and 5,6-dimethylbenzimidazole (DMB). The chain is Nicotinate-nucleotide--dimethylbenzimidazole phosphoribosyltransferase from Thermus thermophilus (strain ATCC 27634 / DSM 579 / HB8).